The sequence spans 527 residues: Putative BTB/POZ domain and WD-repeat protein R783 (527 aa).

The 71-residue stretch at 45 to 115 folds into the BTB domain; it reads TDVTIVLDDG…FYSQNTDTRN (71 aa). WD repeat units follow at residues 215 to 266, 272 to 310, 313 to 353, 355 to 391, and 436 to 476; these read IHGD…VEAS, NVKT…LIKT, KHKN…IVRC, ISPV…FLFK, and YCPS…DNKY.

The protein belongs to the mimivirus BTB/WD family.

This Acanthamoeba polyphaga (Amoeba) protein is Putative BTB/POZ domain and WD-repeat protein R783.